We begin with the raw amino-acid sequence, 640 residues long: UvrABC system protein C (640 aa).

One can recognise a GIY-YIG domain in the interval 22-101; sequence NDPGCYLMKD…IKSHQPYFNV (80 aa). The 36-residue stretch at 211–246 folds into the UVR domain; sequence DELRILLEKQMISFSESLKFEEAGSVRDQLKGIDRL.

This sequence belongs to the UvrC family. Interacts with UvrB in an incision complex.

The protein localises to the cytoplasm. The UvrABC repair system catalyzes the recognition and processing of DNA lesions. UvrC both incises the 5' and 3' sides of the lesion. The N-terminal half is responsible for the 3' incision and the C-terminal half is responsible for the 5' incision. This Prochlorococcus marinus (strain NATL1A) protein is UvrABC system protein C.